Reading from the N-terminus, the 288-residue chain is Hyaluronidase (288 aa).

N-linked (GlcNAc...) asparagine glycosylation is present at N36. E66 (proton donor) is an active-site residue. A disulfide bridge links C142 with C154. The N-linked (GlcNAc...) asparagine glycan is linked to N282.

This sequence belongs to the glycosyl hydrolase 56 family. Expressed by the venom gland.

It localises to the secreted. It carries out the reaction Random hydrolysis of (1-&gt;4)-linkages between N-acetyl-beta-D-glucosamine and D-glucuronate residues in hyaluronate.. In terms of biological role, hydrolyzes high molecular weight hyaluronic acid to produce small oligosaccharides. The sequence is that of Hyaluronidase from Polybia paulista (Neotropical social wasp).